The chain runs to 1014 residues: MRVPVFEDIKDETEEEKIGEEENEEDQVFYKPVIEDLSMELARKCTELISDIRYKEEFKKSKDKCTFVTDSPMLNHVKNIGAFISEAKYKGTIKADLSNSLYKRMPATIDSVFAGEVTQLQSEVAYKQKHDAAKGFSDYAHMKEPPEVKHAMEVNKHQSNISYRKDVQDTHTYSAELDRPDIKMATQISKIISNAEYKKGQGIMNKEPAVIGRPDFEHAVEASKLSSQIKYKEKFDNEMKDKKHHYNPLESASFRQNQLAATLASNVKYKKDIQNMHDPVSDLPNLLFLDHVLKASKMLSGREYKKLFEENKGMYHFDADAVEHLHHKGNAVLQSQVKYKEEYEKNKGKPMLEFVETPSYQASKEAQKMQSEKVYKEDFEKEIKGRSSLDLDKTPEFLHVKYITNLLREKEYKKDLENEIKGKGMELNSEVLDIQRAKRASEMASEKEYKKDLESIIKGKGMQAGTDTLEMQHAKKAAEIASEKDYKRDLETEIKGKGMQVSTDTLDVQRAKKASEMASQKQYKKDLENEIKGKGMQVSMDIPDILRAKRTSEIYSQRKYKDEAEKMLSNYSTIADTPEIQRIKTTQQNISAVFYKKEVGAGTAVKDSPEIERVKKNQQNISSVKYKEEIKHATAISDPPELKRVKENQKNISNLQYKEQNYKATPVSMTPEIERVRRNQEQLSAVKYKGELQRGTAISDPPELKRAKENQKNISNVYYRGQLGRATTLSVTPEMERVKKNQENISSVKYTQDHKQMKGRPSLILDTPAMRHVKEAQNHISMVKYHEDFEKTKGRGFTPVVDDPVTERVRKNTQVVSDAAYKGVHPHIVEMDRRPGIIVDLKVWRTDPGSIFDLDPLEDNIQSRSLHMLSEKASHYRRHWSRSHSSSTFGTGLGDDRSEISEIYPSFSCCSEVTRPSDEGAPVLPGAYQQSHSQGYGYMHQTSVSSMRSMQHSPNLRTYRAMYDYSAQDEDEVSFRDGDYIVNVQPIDDGWMYGTVQRTGRTGMLPANYIEFVN.

Positions 1–24 are disordered; the sequence is MRVPVFEDIKDETEEEKIGEEENE. Residues 9 to 24 show a composition bias toward acidic residues; sequence IKDETEEEKIGEEENE. 23 Nebulin repeats span residues 29–63, 64–99, 100–136, 137–172, 173–205, 206–241, 242–278, 279–313, 314–348, 349–385, 386–422, 423–459, 460–496, 497–533, 534–569, 570–599, 600–635, 636–666, 667–693, 694–728, 729–759, 760–794, and 795–830; these read FYKP…KSKD, KCTF…DLSN, SLYK…AKGF, SDYA…DTHT, YSAE…GIMN, KEPA…EMKD, KKHH…NMHD, PVSD…ENKG, MYHF…KNKG, KPML…EIKG, RSSL…EIKG, KGME…IIKG, KGMQ…EIKG, KGMQ…KMLS, NYST…KKEV, GAGT…HATA, ISDP…KATP, VSMT…GELQ, RGTA…RATT, LSVT…QMKG, RPSL…KTKG, and RGFT…HIVE. Aspartate 96 is subject to Omega-N-methylarginine. The residue at position 795 (arginine 795) is an Omega-N-methylarginine. A linker region spans residues 836–953; the sequence is GIIVDLKVWR…VSSMRSMQHS (118 aa). The region spanning 954–1014 is the SH3 domain; it reads PNLRTYRAMY…LPANYIEFVN (61 aa).

Interacts (via nebulin repeats 1-5) with DESM (via rod region). Interacts (via SH3 domain) with XIRP2. In terms of assembly, interacts with ZYX/Zyxin. As to expression, abundantly expressed in cardiac muscle, but not in skeletal or smooth muscle. Localized to Z-lines in cardiac cells and to dense bodies in nonmuscle cells. Isoform 2 is expressed in non-muscle cells such as in fibroblasts.

The protein localises to the cytoplasm. In terms of biological role, binds to actin and plays an important role in the assembly of the Z-disk. May functionally link sarcomeric actin to the desmin intermediate filaments in the heart muscle sarcomeres. May play a role in the assembly of focal adhesions. The chain is Nebulette from Homo sapiens (Human).